A 172-amino-acid chain; its full sequence is Adenine phosphoribosyltransferase (172 aa).

The protein belongs to the purine/pyrimidine phosphoribosyltransferase family. As to quaternary structure, homodimer.

It localises to the cytoplasm. It carries out the reaction AMP + diphosphate = 5-phospho-alpha-D-ribose 1-diphosphate + adenine. Its pathway is purine metabolism; AMP biosynthesis via salvage pathway; AMP from adenine: step 1/1. Functionally, catalyzes a salvage reaction resulting in the formation of AMP, that is energically less costly than de novo synthesis. This is Adenine phosphoribosyltransferase from Clostridium perfringens (strain ATCC 13124 / DSM 756 / JCM 1290 / NCIMB 6125 / NCTC 8237 / Type A).